The sequence spans 442 residues: tRNA modification GTPase MnmE (442 aa).

(6S)-5-formyl-5,6,7,8-tetrahydrofolate contacts are provided by Arg-22, Glu-79, and Lys-118. One can recognise a TrmE-type G domain in the interval 215-365 (EIPIAIVGRP…LEKAILFEYQ (151 aa)). Asn-225 is a binding site for K(+). GTP is bound by residues 225–230 (NVGKSS), 244–250 (TNIEGTT), and 269–272 (DTAG). Ser-229 serves as a coordination point for Mg(2+). K(+) is bound by residues Thr-244, Ile-246, and Thr-249. Thr-250 contacts Mg(2+). Residue Lys-442 coordinates (6S)-5-formyl-5,6,7,8-tetrahydrofolate.

Belongs to the TRAFAC class TrmE-Era-EngA-EngB-Septin-like GTPase superfamily. TrmE GTPase family. As to quaternary structure, homodimer. Heterotetramer of two MnmE and two MnmG subunits. The cofactor is K(+).

It localises to the cytoplasm. In terms of biological role, exhibits a very high intrinsic GTPase hydrolysis rate. Involved in the addition of a carboxymethylaminomethyl (cmnm) group at the wobble position (U34) of certain tRNAs, forming tRNA-cmnm(5)s(2)U34. The sequence is that of tRNA modification GTPase MnmE from Mycoplasmopsis pulmonis (strain UAB CTIP) (Mycoplasma pulmonis).